Consider the following 147-residue polypeptide: Small ribosomal subunit protein uS12 (147 aa).

The protein belongs to the universal ribosomal protein uS12 family. In terms of assembly, part of the 30S ribosomal subunit.

In terms of biological role, with S4 and S5 plays an important role in translational accuracy. Located at the interface of the 30S and 50S subunits. The sequence is that of Small ribosomal subunit protein uS12 from Thermofilum pendens (strain DSM 2475 / Hrk 5).